We begin with the raw amino-acid sequence, 208 residues long: Outer-membrane lipoprotein carrier protein (208 aa).

A signal peptide spans M1–A21.

Belongs to the LolA family. As to quaternary structure, monomer.

It is found in the periplasm. Participates in the translocation of lipoproteins from the inner membrane to the outer membrane. Only forms a complex with a lipoprotein if the residue after the N-terminal Cys is not an aspartate (The Asp acts as a targeting signal to indicate that the lipoprotein should stay in the inner membrane). This chain is Outer-membrane lipoprotein carrier protein, found in Pseudomonas aeruginosa (strain UCBPP-PA14).